The following is a 423-amino-acid chain: Phosphoribosylamine--glycine ligase (423 aa).

In terms of domain architecture, ATP-grasp spans 107-314 (KAFMAKYNIP…LSDLVEAAID (208 aa)). 133 to 194 (VNQKGAPIVI…EDFLQGEEAS (62 aa)) contributes to the ATP binding site. The Mg(2+) site is built by Glu-284 and Asn-286.

It belongs to the GARS family. Mg(2+) serves as cofactor. Requires Mn(2+) as cofactor.

The enzyme catalyses 5-phospho-beta-D-ribosylamine + glycine + ATP = N(1)-(5-phospho-beta-D-ribosyl)glycinamide + ADP + phosphate + H(+). It functions in the pathway purine metabolism; IMP biosynthesis via de novo pathway; N(1)-(5-phospho-D-ribosyl)glycinamide from 5-phospho-alpha-D-ribose 1-diphosphate: step 2/2. This is Phosphoribosylamine--glycine ligase from Neisseria meningitidis serogroup A / serotype 4A (strain DSM 15465 / Z2491).